The sequence spans 297 residues: uncharacterized protein (297 aa).

Glu46 is an active-site residue.

This sequence belongs to the PhzF family. As to quaternary structure, homodimer and homotetramer.

This is an uncharacterized protein from Escherichia coli (strain K12).